Consider the following 646-residue polypeptide: Macrolide export ATP-binding/permease protein MacB (646 aa).

Positions 7–245 (IRLEDICKTF…EATLQPHEEI (239 aa)) constitute an ABC transporter domain. 43–50 (GASGSGKS) provides a ligand contact to ATP. Helical transmembrane passes span 274–294 (VLTL…LAIG), 528–548 (VAAI…LVSV), 572–592 (FIIE…ILGL), and 609–629 (FGPV…FGFL).

It belongs to the ABC transporter superfamily. Macrolide exporter (TC 3.A.1.122) family. As to quaternary structure, homodimer.

The protein resides in the cell inner membrane. Non-canonical ABC transporter that contains transmembrane domains (TMD), which form a pore in the inner membrane, and an ATP-binding domain (NBD), which is responsible for energy generation. Confers resistance against macrolides. The sequence is that of Macrolide export ATP-binding/permease protein MacB from Brucella abortus (strain 2308).